Reading from the N-terminus, the 180-residue chain is UPF0227 protein YcfP (180 aa).

This sequence belongs to the UPF0227 family.

The sequence is that of UPF0227 protein YcfP from Salmonella gallinarum (strain 287/91 / NCTC 13346).